Here is a 230-residue protein sequence, read N- to C-terminus: MRLAGPLRIVALVVSVGLTWIVVSILLGGPGSGFPRIQQLFTSPESSVTAAPRARKYKCGLPQPCPEEHLAFRVVSGAANVIGPKICLEDKMLMSSVKDNVGRGLNIALVNGVSGELIEARAFDMWAGDVNDLLKFIRPLHEGTLVFVASYDDPATKMNEETRKLFSELGSRNAKELAFRDSWVFVGAKGVQNKSPFEQHVKNSKHTNKYEGWPEALEMEGCIPRRSTAS.

Residues methionine 1–glycine 33 form the signal peptide. 2 disulfide bridges follow: cysteine 59/cysteine 87 and cysteine 65/cysteine 222. The GG-type lectin domain occupies glutamate 68 to arginine 226.

The protein belongs to the FAM3 family.

It localises to the secreted. This is Protein FAM3A (FAM3A) from Pongo abelii (Sumatran orangutan).